Reading from the N-terminus, the 1267-residue chain is Ankyrin repeat and ELMO domain-containing protein D (1267 aa).

An ELMO domain is found at 307-466 (SHQRLLETLW…FVSGLASEVL (160 aa)). Positions 486-496 (KKKEKKSEKRG) are enriched in basic and acidic residues. Residues 486-598 (KKKEKKSEKR…NNHILNNNHL (113 aa)) are disordered. The segment covering 507–598 (GSNGNINSTT…NNHILNNNHL (92 aa)) has biased composition (low complexity). 4 ANK repeats span residues 655 to 685 (DGNS…FLNT), 689 to 718 (QGLT…DPFI), 767 to 796 (TLET…NINN), and 801 to 830 (SGQN…DPSI). Disordered regions lie at residues 854 to 908 (NPTK…NSTS), 924 to 1040 (TSIN…SPIF), 1057 to 1082 (SPTQ…NGAE), and 1103 to 1215 (ENLT…PPKD). Low complexity-rich tracts occupy residues 859–870 (SRSTSSTSSSTS), 895–908 (ITNN…NSTS), and 924–1033 (TSIN…STSP). Positions 1057 to 1080 (SPTQESPQVISTPTSPPYLSNNNG) are enriched in polar residues. Composition is skewed to low complexity over residues 1108 to 1176 (NSGN…IGSH) and 1184 to 1213 (HNGP…VTPP).

The protein is Ankyrin repeat and ELMO domain-containing protein D (elmoD) of Dictyostelium discoideum (Social amoeba).